Consider the following 434-residue polypeptide: tRNA modification GTPase MnmE (434 aa).

3 residues coordinate (6S)-5-formyl-5,6,7,8-tetrahydrofolate: R20, E79, and V119. Positions 219–361 (GLRVVLAGRP…LQEKLVEIGK (143 aa)) constitute a TrmE-type G domain. Residues 229–234 (NAGKST), 248–254 (APIAGTT), and 273–276 (DTAG) each bind GTP. The Mg(2+) site is built by S233 and T254. K434 serves as a coordination point for (6S)-5-formyl-5,6,7,8-tetrahydrofolate.

It belongs to the TRAFAC class TrmE-Era-EngA-EngB-Septin-like GTPase superfamily. TrmE GTPase family. As to quaternary structure, homodimer. Heterotetramer of two MnmE and two MnmG subunits. K(+) serves as cofactor.

It is found in the cytoplasm. Exhibits a very high intrinsic GTPase hydrolysis rate. Involved in the addition of a carboxymethylaminomethyl (cmnm) group at the wobble position (U34) of certain tRNAs, forming tRNA-cmnm(5)s(2)U34. The chain is tRNA modification GTPase MnmE from Zymomonas mobilis subsp. mobilis (strain ATCC 31821 / ZM4 / CP4).